The following is a 123-amino-acid chain: Small ribosomal subunit protein uS12 (123 aa).

The residue at position 89 (Asp-89) is a 3-methylthioaspartic acid.

This sequence belongs to the universal ribosomal protein uS12 family. As to quaternary structure, part of the 30S ribosomal subunit. Contacts proteins S8 and S17. May interact with IF1 in the 30S initiation complex.

In terms of biological role, with S4 and S5 plays an important role in translational accuracy. Interacts with and stabilizes bases of the 16S rRNA that are involved in tRNA selection in the A site and with the mRNA backbone. Located at the interface of the 30S and 50S subunits, it traverses the body of the 30S subunit contacting proteins on the other side and probably holding the rRNA structure together. The combined cluster of proteins S8, S12 and S17 appears to hold together the shoulder and platform of the 30S subunit. The sequence is that of Small ribosomal subunit protein uS12 from Orientia tsutsugamushi (strain Boryong) (Rickettsia tsutsugamushi).